We begin with the raw amino-acid sequence, 336 residues long: MTKIAVLGGGSWGTALANVAAENNNDVRLWTRTATQADEINSQHTNQKYLPDAKLSSELMATSNMALAVMDAEIVLTVVPTKVVREVARQLADVLNKQDHQVILAHATKGLEQVTYKRVSEMLAEEVPAKYRSTLAMISGPSHAEDVIKHDLTSVSIASENEEAAKLLQQVFANSSFRPYTNHDLLGSELAAALKNIIAIGSGALIGLGYGANAQAALLTRGLSEMRALGQAMGAQPETFLGLAGIGDLIVTGMSPNSRNYRAGKQLGEGKSLQEIQDDMGMVIEGVSTTKAVYEFSQHHHVEMPITAGIYRILYENEPLRDVISDLMSRPLRSED.

NADPH contacts are provided by Ser11, Trp12, Arg32, and Lys109. Lys109, Gly140, and Ser142 together coordinate sn-glycerol 3-phosphate. An NADPH-binding site is contributed by Ala144. Positions 195, 248, 258, 259, and 260 each coordinate sn-glycerol 3-phosphate. Lys195 functions as the Proton acceptor in the catalytic mechanism. Arg259 is a binding site for NADPH. Positions 283 and 285 each coordinate NADPH.

This sequence belongs to the NAD-dependent glycerol-3-phosphate dehydrogenase family.

Its subcellular location is the cytoplasm. It carries out the reaction sn-glycerol 3-phosphate + NAD(+) = dihydroxyacetone phosphate + NADH + H(+). The enzyme catalyses sn-glycerol 3-phosphate + NADP(+) = dihydroxyacetone phosphate + NADPH + H(+). The protein operates within membrane lipid metabolism; glycerophospholipid metabolism. Functionally, catalyzes the reduction of the glycolytic intermediate dihydroxyacetone phosphate (DHAP) to sn-glycerol 3-phosphate (G3P), the key precursor for phospholipid synthesis. The sequence is that of Glycerol-3-phosphate dehydrogenase [NAD(P)+] from Leuconostoc mesenteroides subsp. mesenteroides (strain ATCC 8293 / DSM 20343 / BCRC 11652 / CCM 1803 / JCM 6124 / NCDO 523 / NBRC 100496 / NCIMB 8023 / NCTC 12954 / NRRL B-1118 / 37Y).